A 140-amino-acid chain; its full sequence is Small ribosomal subunit protein eS17y (140 aa).

The protein belongs to the eukaryotic ribosomal protein eS17 family.

The sequence is that of Small ribosomal subunit protein eS17y (RPS17B) from Arabidopsis thaliana (Mouse-ear cress).